The chain runs to 83 residues: Retinal cone rhodopsin-sensitive cGMP 3',5'-cyclic phosphodiesterase subunit gamma (83 aa).

Residues 1–19 (MSDNTTLAPPAASQAPATP) are compositionally biased toward low complexity. The interval 1–51 (MSDNTTLAPPAASQAPATPRKGPPKFKQRQTRQFKSKPPKKGVKGFGDDIP) is disordered. A compositionally biased stretch (basic residues) spans 22–43 (GPPKFKQRQTRQFKSKPPKKGV).

This sequence belongs to the rod/cone cGMP-PDE gamma subunit family. As to quaternary structure, tetramer composed of two catalytic chains (alpha and beta), and two inhibitory chains (gamma).

The catalysed reaction is 3',5'-cyclic GMP + H2O = GMP + H(+). Its function is as follows. Participates in processes of transmission and amplification of the visual signal. cGMP-PDEs are the effector molecules in G-protein-mediated phototransduction in vertebrate rods and cones. In Ictidomys tridecemlineatus (Thirteen-lined ground squirrel), this protein is Retinal cone rhodopsin-sensitive cGMP 3',5'-cyclic phosphodiesterase subunit gamma (PDE6H).